The sequence spans 468 residues: Na(+)/H(+) antiporter NhaA (468 aa).

12 helical membrane passes run 28-48 (FLHV…IALV), 79-99 (LHFW…GMEI), 115-135 (ALPL…YLAF), 143-163 (AGWA…LALL), 173-193 (IFLL…IAFF), 196-216 (GGLD…VLGL), 219-239 (IGIG…TGLL), 240-260 (MTGA…PVVP), 317-337 (ALHP…NAGV), 356-376 (VAGA…WLLV), 392-412 (IVLI…IAML), and 426-446 (LGVL…GAIY).

This sequence belongs to the NhaA Na(+)/H(+) (TC 2.A.33) antiporter family.

The protein resides in the cell inner membrane. It catalyses the reaction Na(+)(in) + 2 H(+)(out) = Na(+)(out) + 2 H(+)(in). Na(+)/H(+) antiporter that extrudes sodium in exchange for external protons. The sequence is that of Na(+)/H(+) antiporter NhaA from Bordetella petrii (strain ATCC BAA-461 / DSM 12804 / CCUG 43448).